The chain runs to 43 residues: Hemolysin H3C (43 aa).

The residue at position 1 (Met1) is an N-formylmethionine.

Belongs to the staphylococcal hemolytic protein family.

The protein localises to the secreted. Virulence factor. Causes hemolysis of erythrocytes from sheep (HD(50)=2.63 mM), rabbit (HD(50)=2.37 mM), guinea pig (HD(50)=1.98 mM), dog (HD(50)=1.02 mM) and human (HD(50)=2.07 mM). Acts synergistically with beta-hemolysins from S.aureus ATCC 25923. Cytotoxic towards human dermal fibroblasts. The polypeptide is Hemolysin H3C (Staphylococcus cohnii subsp. cohnii).